Here is a 435-residue protein sequence, read N- to C-terminus: Probable long-chain-alcohol O-fatty-acyltransferase 11 (435 aa).

The next 11 helical transmembrane spans lie at 7–27, 36–56, 59–79, 120–140, 149–169, 200–220, 238–258, 263–283, 300–320, 363–383, and 406–426; these read NLIK…YVPT, FLSV…FASV, SGYT…LFSF, PIEV…SVVL, IYPI…LEIL, DFWG…DVYA, LGVF…FFYI, PTGE…AYDA, CLIL…WLFF, FFTG…IGFV, and FFIG…IGFV.

This sequence belongs to the wax synthase family.

Its subcellular location is the membrane. It catalyses the reaction a long chain fatty alcohol + a fatty acyl-CoA = a wax ester + CoA. In terms of biological role, catalyzes the final step in the synthesis of long-chain linear esters (waxes). This chain is Probable long-chain-alcohol O-fatty-acyltransferase 11, found in Arabidopsis thaliana (Mouse-ear cress).